A 215-amino-acid chain; its full sequence is Redox-sensing transcriptional repressor Rex (215 aa).

The segment at residues 18–57 (LYYRFLKNLHASGKQRVSSAELSDAVKVDSATIRRDFSYF) is a DNA-binding region (H-T-H motif). Residue 92–97 (GVGNLG) coordinates NAD(+).

It belongs to the transcriptional regulatory Rex family. In terms of assembly, homodimer.

It is found in the cytoplasm. Modulates transcription in response to changes in cellular NADH/NAD(+) redox state. This chain is Redox-sensing transcriptional repressor Rex, found in Bacillus licheniformis (strain ATCC 14580 / DSM 13 / JCM 2505 / CCUG 7422 / NBRC 12200 / NCIMB 9375 / NCTC 10341 / NRRL NRS-1264 / Gibson 46).